The sequence spans 292 residues: Ribosomal protein L11 methyltransferase (292 aa).

Residues T136, G159, D181, and N228 each contribute to the S-adenosyl-L-methionine site.

The protein belongs to the methyltransferase superfamily. PrmA family.

Its subcellular location is the cytoplasm. The enzyme catalyses L-lysyl-[protein] + 3 S-adenosyl-L-methionine = N(6),N(6),N(6)-trimethyl-L-lysyl-[protein] + 3 S-adenosyl-L-homocysteine + 3 H(+). In terms of biological role, methylates ribosomal protein L11. This chain is Ribosomal protein L11 methyltransferase, found in Rhizobium johnstonii (strain DSM 114642 / LMG 32736 / 3841) (Rhizobium leguminosarum bv. viciae).